The primary structure comprises 254 residues: tRNA (guanine-N(7)-)-methyltransferase (254 aa).

Positions 82, 107, 134, and 157 each coordinate S-adenosyl-L-methionine. The active site involves Asp157. Residues Lys161, Asp193, and 233-236 each bind substrate; that span reads TKFE.

This sequence belongs to the class I-like SAM-binding methyltransferase superfamily. TrmB family.

It carries out the reaction guanosine(46) in tRNA + S-adenosyl-L-methionine = N(7)-methylguanosine(46) in tRNA + S-adenosyl-L-homocysteine. It participates in tRNA modification; N(7)-methylguanine-tRNA biosynthesis. Catalyzes the formation of N(7)-methylguanine at position 46 (m7G46) in tRNA. This chain is tRNA (guanine-N(7)-)-methyltransferase, found in Corynebacterium jeikeium (strain K411).